Consider the following 226-residue polypeptide: MMDRGECLMSMKLRPMVTRPSSDGTLFWPFREERAFASAEEYGGGGGCMWPPRSYSCSFCGREFKSAQALGGHMNVHRRDRARLKQQSLSPSSTDQATPPECDRQQQVLDVGSKVLVQEETRKPNGTKREISDVCNNNVLESSMKRYEHDNGEVKTDLSVGLLSTEFDPRKKQLINGSSSSWKRAKTDVSRFPMMLGLVIGISEINGHHEELDLELRLGADPPKVN.

A C2H2-type zinc finger spans residues 55 to 77; that stretch reads YSCSFCGREFKSAQALGGHMNVH. The tract at residues 80–102 is disordered; that stretch reads DRARLKQQSLSPSSTDQATPPEC. Residues 85 to 97 are compositionally biased toward polar residues; that stretch reads KQQSLSPSSTDQA. The short motif at 212 to 216 is the EAR-like (transcriptional repression) element; the sequence is LDLEL.

Strongly expressed in inflorescences and flowers, and weakly in siliques, seedlings and roots. In flowers, it is expressed in petal primordia and their precursor cells. Also expressed in the lateral root caps and the basal cells of lateral roots.

It localises to the nucleus. Its function is as follows. Probable transcriptional regulator essential for petal development. Required for the early development of the organ primordia of the second whorl. Acts downstream of AP1 and PTL. The protein is Probable transcriptional regulator RABBIT EARS (RBE) of Arabidopsis thaliana (Mouse-ear cress).